A 226-amino-acid chain; its full sequence is Protein Thf1 (226 aa).

The stretch at 183-213 (EEKMQKDLDLYRSNLEKMDQLLTVIEEALQA) forms a coiled coil.

The protein belongs to the THF1 family.

In terms of biological role, may be involved in photosynthetic membrane biogenesis. This is Protein Thf1 from Gloeothece citriformis (strain PCC 7424) (Cyanothece sp. (strain PCC 7424)).